The following is a 432-amino-acid chain: 23S rRNA (uracil(1939)-C(5))-methyltransferase RlmD (432 aa).

Residues 1–54 (MNPVVDILSLDHEGHGVARLDGKVTFVDGALAGERAEIAIFRKHAKYNSANAVA) enclose the TRAM domain. Cys-67, Cys-73, Cys-76, and Cys-155 together coordinate [4Fe-4S] cluster. The S-adenosyl-L-methionine site is built by Gln-264, Phe-293, Asn-298, Glu-314, Asn-341, and Asp-362. Residue Cys-389 is the Nucleophile of the active site.

It belongs to the class I-like SAM-binding methyltransferase superfamily. RNA M5U methyltransferase family. RlmD subfamily.

It catalyses the reaction uridine(1939) in 23S rRNA + S-adenosyl-L-methionine = 5-methyluridine(1939) in 23S rRNA + S-adenosyl-L-homocysteine + H(+). Catalyzes the formation of 5-methyl-uridine at position 1939 (m5U1939) in 23S rRNA. The polypeptide is 23S rRNA (uracil(1939)-C(5))-methyltransferase RlmD (Thiobacillus denitrificans (strain ATCC 25259 / T1)).